Reading from the N-terminus, the 466-residue chain is Neuropeptide Y receptor type 5 (466 aa).

The Extracellular segment spans residues 1-63 (MEVKLEEHFN…YRGSVDDLQY (63 aa)). 4 N-linked (GlcNAc...) asparagine glycosylation sites follow: Asn-10, Asn-17, Asn-38, and Asn-39. The chain crosses the membrane as a helical span at residues 64-84 (FLIGLYTFVSLLGFMGNLLIL). Residues 85 to 98 (MAVMKKRNQKTTVN) are Cytoplasmic-facing. A helical transmembrane segment spans residues 99–119 (FLIGNLAFSDILVVLFCSPFT). Over 120–138 (LTSVLLDQWMFGKAMCHIM) the chain is Extracellular. A disulfide bridge links Cys-135 with Cys-219. A helical transmembrane segment spans residues 139-159 (PFLQCVSVLVSTLILISIAIV). At 160 to 177 (RYHMIKHPISNNLTANHG) the chain is on the cytoplasmic side. Residues 178-198 (YFLIATVWTLGFAICSPLPVF) traverse the membrane as a helical segment. The Extracellular segment spans residues 199–229 (HSLVELKETFGSALLSSKYLCVESWPSDSYR). The chain crosses the membrane as a helical span at residues 230-250 (IAFTISLLLVQYILPLVCLTV). Over 251 to 389 (SHTSVCRSIS…KKRSRSVFYR (139 aa)) the chain is Cytoplasmic. Residues 323–346 (GPSQEKHLTVPENPGSVRSQLSPS) are disordered. The helical transmembrane segment at 390–410 (LTILILVFAVSWMPLHVFHVV) threads the bilayer. Topologically, residues 411-427 (TDFNDNLISNRHFKLVY) are extracellular. Residues 428-448 (CICHLLGMMSCCLNPILYGFL) form a helical membrane-spanning segment. Residues 449–466 (NNGIKADLRALIHCLHMS) are Cytoplasmic-facing. Cys-462 is lipidated: S-palmitoyl cysteine.

Belongs to the G-protein coupled receptor 1 family.

The protein resides in the cell membrane. Receptor for neuropeptide Y and peptide YY. The activity of this receptor is mediated by G proteins that inhibit adenylate cyclase activity. Seems to be associated with food intake. Could be involved in feeding disorders. The sequence is that of Neuropeptide Y receptor type 5 (Npy5r) from Mus musculus (Mouse).